A 226-amino-acid polypeptide reads, in one-letter code: Type-5 uracil-DNA glycosylase (226 aa).

Residues C23, C26, C125, and C140 each coordinate [4Fe-4S] cluster.

Belongs to the uracil-DNA glycosylase (UDG) superfamily. Type 5 (UDGb) family.

Functionally, DNA glycosylase with broad substrate specificity. Can remove uracil from double-stranded DNA containing either a U/G or U/A base pair. Can also process hydroxymethyluracil (mispaired with guanine or adenine), hypoxanthine and fluorouracil. Exhibits a clear preference for double-stranded DNA substrates, but can also process uracil in single-stranded DNA, with lower efficiency. This chain is Type-5 uracil-DNA glycosylase, found in Pyrobaculum aerophilum (strain ATCC 51768 / DSM 7523 / JCM 9630 / CIP 104966 / NBRC 100827 / IM2).